The following is a 514-amino-acid chain: Putative thymidine phosphorylase (514 aa).

Belongs to the thymidine/pyrimidine-nucleoside phosphorylase family. Type 2 subfamily.

It carries out the reaction thymidine + phosphate = 2-deoxy-alpha-D-ribose 1-phosphate + thymine. The sequence is that of Putative thymidine phosphorylase from Sphingopyxis alaskensis (strain DSM 13593 / LMG 18877 / RB2256) (Sphingomonas alaskensis).